We begin with the raw amino-acid sequence, 299 residues long: Bifunctional protein FolD (299 aa).

Residues 168 to 170 (GRS), Ser-193, and Ile-234 each bind NADP(+).

The protein belongs to the tetrahydrofolate dehydrogenase/cyclohydrolase family. In terms of assembly, homodimer.

It carries out the reaction (6R)-5,10-methylene-5,6,7,8-tetrahydrofolate + NADP(+) = (6R)-5,10-methenyltetrahydrofolate + NADPH. It catalyses the reaction (6R)-5,10-methenyltetrahydrofolate + H2O = (6R)-10-formyltetrahydrofolate + H(+). Its pathway is one-carbon metabolism; tetrahydrofolate interconversion. Its function is as follows. Catalyzes the oxidation of 5,10-methylenetetrahydrofolate to 5,10-methenyltetrahydrofolate and then the hydrolysis of 5,10-methenyltetrahydrofolate to 10-formyltetrahydrofolate. The protein is Bifunctional protein FolD of Bartonella bacilliformis (strain ATCC 35685 / KC583 / Herrer 020/F12,63).